Reading from the N-terminus, the 569-residue chain is MDKSSGLDFINQMFPVEASLSCVESFMQKICDEIRRVDATILAVVSQQGNSGTRAKENLNDAICAAEELSHKIQEIKSKAEQTEAMVQDICSDIKKLDFAKKNITTAVTALSRLTMLVSAVQQLQVMTSKRQYKEAATQLEAINELCNHFKAYMDLPKIMELREKLKNIKQILKFHVFSDFSSLGTGTETEELFLLKKLSDSCLVVDALEPSVREELINNFCSRELTSYEQIYVGAELKTLDEIELIYNQLSCLIRKNQGKWTIFPASWHVPYRLCIQLSRKTRVQVESILVNLKEKSDVEKLLLELKRTLEFERELEMKFGGGGSIGDDIIGGGGNNSQKFNFRGMISSCFEPHLTIYIEKEEMELMQLLEKVVQEETWDIEEELGCHSENSVYLMLLDAHDMKMILLKVPSLARQPEASALLVKTATASYVKLVNHQMKRAEAVLKVIASPIVTVIDTYRALFPEETPMEFQRILVLKGLTKAEQQSILDDFNNHSSRITQLSVAAKTPEAHALPLALTNVAPAVRFKANSEEVLTRAASAATTSFMKLYALTGAAKDRPFRKLFNP.

Coiled coils occupy residues 53 to 90, 125 to 145, and 295 to 316; these read TRAKENLNDAICAAEELSHKIQEIKSKAEQTEAMVQDI, QVMTSKRQYKEAATQLEAINE, and KEKSDVEKLLLELKRTLEFERE.

The protein belongs to the VPS53 family. In terms of assembly, component of the Golgi-associated retrograde protein (GARP) complex.

It localises to the cytoplasm. Its subcellular location is the golgi apparatus. The protein resides in the trans-Golgi network membrane. The protein localises to the endosome membrane. Functionally, involved in retrograde transport from early and late endosomes to late Golgi, leading to the membrane fusion between late Golgi and endosomal vesicles. The polypeptide is Vacuolar protein sorting-associated protein 53 B (Arabidopsis thaliana (Mouse-ear cress)).